Reading from the N-terminus, the 455-residue chain is Chitin deacetylase 2 (455 aa).

Residues 1–19 (MIPSTAAALLTLTAGAAFA) form the signal peptide. N-linked (GlcNAc...) asparagine glycans are attached at residues asparagine 86, asparagine 98, asparagine 122, and asparagine 142. Residues 157 to 347 (MTWGLGFDDG…IKSAFNYIVP (191 aa)) form the NodB homology domain. Aspartate 164 functions as the Proton acceptor in the catalytic mechanism. An acetate-binding site is contributed by aspartate 164. Residue aspartate 165 participates in Co(2+) binding. Asparagine 168 carries N-linked (GlcNAc...) asparagine glycosylation. 2 residues coordinate Co(2+): histidine 214 and histidine 218. Tyrosine 255 provides a ligand contact to acetate. Asparagine 270 and asparagine 308 each carry an N-linked (GlcNAc...) asparagine glycan. Histidine 321 serves as the catalytic Proton donor. N-linked (GlcNAc...) asparagine glycans are attached at residues asparagine 325, asparagine 353, asparagine 362, and asparagine 377. Positions 381–423 (STTQKDGSSSTNTASGSGAAGSASATSSSDDSSSSGGSSGSSG) are disordered. Asparagine 426 carries an N-linked (GlcNAc...) asparagine glycan. Serine 429 carries GPI-anchor amidated serine lipidation. Residues 430-455 (GALGMFDSLSGVGLILGGVVAGVMLL) constitute a propeptide, removed in mature form.

It belongs to the polysaccharide deacetylase family. Co(2+) serves as cofactor. The GPI anchor is required for the attachment to the cell membrane but not for cell surface targeting.

The protein localises to the secreted. It localises to the cell wall. It is found in the cell membrane. It carries out the reaction [(1-&gt;4)-N-acetyl-beta-D-glucosaminyl](n) + n H2O = chitosan + n acetate. Hydrolyzes the N-acetamido groups of N-acetyl-D-glucosamine residues in chitin to form chitosan and acetate. Chitosan is required to anchor melanin to the cell wall, for maintenance of cell wall integrity, and for proper cytokinesis. Chitosan offers an advantage during infection as it is less readily detected than chitin by host immunosurveillance mechanisms. This is Chitin deacetylase 2 from Cryptococcus neoformans var. grubii serotype A (strain H99 / ATCC 208821 / CBS 10515 / FGSC 9487) (Filobasidiella neoformans var. grubii).